Reading from the N-terminus, the 547-residue chain is Chaperonin GroEL (547 aa).

Residues T30–P33, K51, D87–T91, G415, N479–A481, and D495 each bind ATP.

The protein belongs to the chaperonin (HSP60) family. As to quaternary structure, forms a cylinder of 14 subunits composed of two heptameric rings stacked back-to-back. Interacts with the co-chaperonin GroES.

The protein localises to the cytoplasm. The catalysed reaction is ATP + H2O + a folded polypeptide = ADP + phosphate + an unfolded polypeptide.. In terms of biological role, together with its co-chaperonin GroES, plays an essential role in assisting protein folding. The GroEL-GroES system forms a nano-cage that allows encapsulation of the non-native substrate proteins and provides a physical environment optimized to promote and accelerate protein folding. This chain is Chaperonin GroEL, found in Delftia acidovorans (strain DSM 14801 / SPH-1).